The sequence spans 447 residues: Protein disulfide-isomerase like 2-2 (447 aa).

A signal peptide spans 1-26; it reads MERKMYKSTVFPICCLLFALFDRGNA. Thioredoxin domains lie at 27–139 and 161–275; these read LYGS…QIKA and KKKS…QLES. Residues Cys62 and Cys65 each act as nucleophile in the active site. Cys62 and Cys65 are oxidised to a cystine. The segment at 146-170 is disordered; it reads DGKTSGTKNGGGSSEKKKSEPSASV. An N-linked (GlcNAc...) asparagine glycan is attached at Asn173. Residues Cys197 and Cys200 each act as nucleophile in the active site. Cys197 and Cys200 are joined by a disulfide. The Prevents secretion from ER motif lies at 444–447; the sequence is KDDL.

This sequence belongs to the protein disulfide isomerase family. As to expression, widely expressed.

The protein localises to the endoplasmic reticulum lumen. The catalysed reaction is Catalyzes the rearrangement of -S-S- bonds in proteins.. Functionally, acts as a protein-folding catalyst that interacts with nascent polypeptides to catalyze the formation, isomerization, and reduction or oxidation of disulfide bonds. In Arabidopsis thaliana (Mouse-ear cress), this protein is Protein disulfide-isomerase like 2-2 (PDIL2-2).